Reading from the N-terminus, the 683-residue chain is uncharacterized protein (683 aa).

Coiled-coil stretches lie at residues 62–124 (PEHY…RKER), 155–259 (TTTN…KLSQ), and 346–376 (KKSL…DGDV). The segment at 213–237 (QDQVESQTGPKKRRKSPIENQPTAG) is disordered.

This is an uncharacterized protein from Invertebrate iridescent virus 3 (IIV-3).